A 166-amino-acid polypeptide reads, in one-letter code: uncharacterized protein (166 aa).

A run of 3 helical transmembrane segments spans residues 4-24 (LNIF…EASI), 101-121 (LITC…SEAI), and 146-166 (SWSS…QCFL).

The protein resides in the membrane. This is an uncharacterized protein from Saccharomyces cerevisiae (strain ATCC 204508 / S288c) (Baker's yeast).